A 626-amino-acid polypeptide reads, in one-letter code: FAD-binding monooxygenase moxY (626 aa).

Low complexity predominate over residues 1–23; sequence MAPFLSAHGESASSSSSSSPTPS. The disordered stretch occupies residues 1 to 47; that stretch reads MAPFLSAHGESASSSSSSSPTPSRHTRNQHVDYSTPGSTGYNIPQNT. A compositionally biased stretch (polar residues) spans 31–47; sequence VDYSTPGSTGYNIPQNT. FAD contacts are provided by residues 96-99, 108-109, and tyrosine 114; these read TWLE and DI. 106–108 provides a ligand contact to NADP(+); it reads GCD. NADP(+)-binding positions include 243–249 and 266–267; these read SGASSIQ and RT.

It belongs to the FAD-binding monooxygenase family. The cofactor is FAD.

The protein operates within mycotoxin biosynthesis. In terms of biological role, FAD-binding monooxygenase; part of the fragmented gene cluster that mediates the biosynthesis of dothistromin (DOTH), a polyketide toxin very similar in structure to the aflatoxin precursor, versicolorin B. The first step of the pathway is the conversion of acetate to norsolorinic acid (NOR) and requires the fatty acid synthase subunits hexA and hexB, as well as the polyketide synthase pksA. PksA combines a hexanoyl starter unit and 7 malonyl-CoA extender units to synthesize the precursor NOR. The hexanoyl starter unit is provided to the acyl-carrier protein (ACP) domain by the fungal fatty acid synthase hexA/hexB. The second step is the conversion of NOR to averantin (AVN) and requires the norsolorinic acid ketoreductase nor1, which catalyzes the dehydration of norsolorinic acid to form (1'S)-averantin. The cytochrome P450 monooxygenase avnA then catalyzes the hydroxylation of AVN to 5'hydroxyaverantin (HAVN). The next step is performed by adhA that transforms HAVN to averufin (AVF). Averufin might then be converted to hydroxyversicolorone by cypX and avfA. Hydroxyversicolorone is further converted versiconal hemiacetal acetate (VHA) by moxY. VHA is then the substrate for the versiconal hemiacetal acetate esterase est1 to yield versiconal (VAL). Versicolorin B synthase vbsA then converts VAL to versicolorin B (VERB) by closing the bisfuran ring. Then, the activity of the versicolorin B desaturase verB leads to versicolorin A (VERA). DotB, a predicted chloroperoxidase, may perform epoxidation of the A-ring of VERA. Alternatively, a cytochrome P450, such as cypX or avnA could catalyze this step. It is also possible that another, uncharacterized, cytochrome P450 enzyme is responsible for this step. Opening of the epoxide could potentially be achieved by the epoxide hydrolase epoA. However, epoA seems not to be required for DOTH biosynthesis, but other epoxide hydrolases may have the ability to complement this hydrolysis. Alternatively, opening of the epoxide ring could be achieved non-enzymatically. The next step is the deoxygenation of ring A to yield the 5,8-dihydroxyanthraquinone which is most likely catalyzed by the NADPH dehydrogenase encoded by ver1. The last stages of DOTH biosynthesis are proposed to involve hydroxylation of the bisfuran. OrdB and norB might have oxidative roles here. An alternative possibility is that cytochrome P450 monoogenases such as avnA and cypX might perform these steps in addition to previously proposed steps. The polypeptide is FAD-binding monooxygenase moxY (Dothistroma septosporum (Red band needle blight fungus)).